An 84-amino-acid polypeptide reads, in one-letter code: Large ribosomal subunit protein bL27 (84 aa).

Residues 1 to 22 (MAHKKAGGSTRNGRDSESKRLG) are disordered.

This sequence belongs to the bacterial ribosomal protein bL27 family.

This chain is Large ribosomal subunit protein bL27, found in Shewanella baltica (strain OS223).